Consider the following 113-residue polypeptide: Hydrogenase maturation factor HypA (113 aa).

Residue His2 participates in Ni(2+) binding. Residues Cys73, Cys76, Cys89, and Cys92 each coordinate Zn(2+).

The protein belongs to the HypA/HybF family.

Its function is as follows. Involved in the maturation of [NiFe] hydrogenases. Required for nickel insertion into the metal center of the hydrogenase. The polypeptide is Hydrogenase maturation factor HypA (Rhodopseudomonas palustris (strain TIE-1)).